Consider the following 426-residue polypeptide: MTQLEAAKRGEITEEMKFIAEREGIDPEKLRRSVAKGYTVIFRNVRHDWVKPVAVGNVVRVKVNANIGTSRDIVNVKAEIEKAKVAVKYGADTIMDLSTGGDLDSIRKAIMHAVDVPIGTVPIYQAAEEMLAKGKAIIEMSEDDMWNAVEKHFKDGVDYTTIHVGVTKEVVEKMKRVKRVVGMVSRGGTFLAAWILHWGEENPFYRDYDYLLELAKEYDVVLSLGDGLRPGGLPDAGDELQIAELYTLGRLVRRAREAGVQTMVEGPGHVPIDQIPAQIKLAKVATDNAPFYVLGPIVTDIFPGYDHITSAIGGAIAALNGADFLCYVTPAEHLGLPTVEHVREGVIAAKIAAHAVNLTRFEADFKKDYLMSLARGKLDWARQFELSQDREKFIEIRKERPTKTEACSMCGDLCAIKLINDMLRKG.

Substrate-binding positions include N66, M95, Y124, H163, 185 to 187 (SRG), 226 to 229 (DGLR), and E265. Position 269 (H269) interacts with Zn(2+). Substrate is bound at residue Y292. H333 lines the Zn(2+) pocket. [4Fe-4S] cluster is bound by residues C407, C410, and C414.

This sequence belongs to the ThiC family. The cofactor is [4Fe-4S] cluster.

It carries out the reaction 5-amino-1-(5-phospho-beta-D-ribosyl)imidazole + S-adenosyl-L-methionine = 4-amino-2-methyl-5-(phosphooxymethyl)pyrimidine + CO + 5'-deoxyadenosine + formate + L-methionine + 3 H(+). Its pathway is cofactor biosynthesis; thiamine diphosphate biosynthesis. Its function is as follows. Catalyzes the synthesis of the hydroxymethylpyrimidine phosphate (HMP-P) moiety of thiamine from aminoimidazole ribotide (AIR) in a radical S-adenosyl-L-methionine (SAM)-dependent reaction. This chain is Phosphomethylpyrimidine synthase, found in Thermococcus gammatolerans (strain DSM 15229 / JCM 11827 / EJ3).